Reading from the N-terminus, the 101-residue chain is MAKNSKIVKNERRLVLVARHAERRAELKAIISSPSTPADARAAAQSELNRQPRDASPVRVRNRDAVDGRPRGHLRKFGLSRMRVRELAHRGQLPGVRKSSW.

The interval 29–73 is disordered; sequence AIISSPSTPADARAAAQSELNRQPRDASPVRVRNRDAVDGRPRGH. A compositionally biased stretch (basic and acidic residues) spans 61–70; it reads RNRDAVDGRP.

The protein belongs to the universal ribosomal protein uS14 family. In terms of assembly, part of the 30S ribosomal subunit. Contacts proteins S3 and S10.

Functionally, binds 16S rRNA, required for the assembly of 30S particles and may also be responsible for determining the conformation of the 16S rRNA at the A site. This is Small ribosomal subunit protein uS14A from Mycolicibacterium gilvum (strain PYR-GCK) (Mycobacterium gilvum (strain PYR-GCK)).